The primary structure comprises 176 residues: Transcriptional repressor MprA (176 aa).

An HTH marR-type domain is found at 26–160 (EILLTRLCMH…LEQITRKLLS (135 aa)).

Negative regulator of the multidrug operon emrAB. This chain is Transcriptional repressor MprA (mprA), found in Escherichia coli O157:H7.